The chain runs to 482 residues: MKFIIKLFPEITIKSQSVRLRFIKILTGNIRNVLKHYDETLAVVRHWDNIEVRAKDENQRLTIRDALTRIPGIHHILEVEDVPFTDMHDIFEKALVQYRDQLEGKTFCVRVKRRGKHDFSSIDVERYVGGGLNQHIESARVKLTNPDVTVHLEVEDDRLLLIKGRYEGIGGFPIGTQEDVLSLISGGFDSGVSSYMLMRRGCRVHYCFFNLGGAAHEIGVRQVAHYLWNRFGSSHRVRFVAINFEPVVGEILEKIDDGQMGVILKRMMVRAASKVAERYGVQALVTGEALGQVSSQTLTNLRLIDNVSDTLILRPLISYDKEHIINLARQIGTEDFARTMPEYCGVISKSPTVKAVKSKIEAEEEKFDFSILDKVVEEANNVDIREIAQQTEQEVVEVETVNGFGPNDVILDIRSVDEQEDKPLKVEGIDVVSLPFYKLSTKFGDLDQNKTWLLWCERGVMSRLQALYLREQGFNNVKVYRP.

The region spanning 61 to 165 is the THUMP domain; it reads LTIRDALTRI…DDRLLLIKGR (105 aa). ATP-binding positions include 183–184, Lys265, Gly287, and Gln296; that span reads LI. Cys344 and Cys456 form a disulfide bridge. The Rhodanese domain maps to 404-482; the sequence is FGPNDVILDI…GFNNVKVYRP (79 aa). Cys456 functions as the Cysteine persulfide intermediate in the catalytic mechanism.

Belongs to the ThiI family.

The protein resides in the cytoplasm. The catalysed reaction is [ThiI sulfur-carrier protein]-S-sulfanyl-L-cysteine + a uridine in tRNA + 2 reduced [2Fe-2S]-[ferredoxin] + ATP + H(+) = [ThiI sulfur-carrier protein]-L-cysteine + a 4-thiouridine in tRNA + 2 oxidized [2Fe-2S]-[ferredoxin] + AMP + diphosphate. It carries out the reaction [ThiS sulfur-carrier protein]-C-terminal Gly-Gly-AMP + S-sulfanyl-L-cysteinyl-[cysteine desulfurase] + AH2 = [ThiS sulfur-carrier protein]-C-terminal-Gly-aminoethanethioate + L-cysteinyl-[cysteine desulfurase] + A + AMP + 2 H(+). It functions in the pathway cofactor biosynthesis; thiamine diphosphate biosynthesis. In terms of biological role, catalyzes the ATP-dependent transfer of a sulfur to tRNA to produce 4-thiouridine in position 8 of tRNAs, which functions as a near-UV photosensor. Also catalyzes the transfer of sulfur to the sulfur carrier protein ThiS, forming ThiS-thiocarboxylate. This is a step in the synthesis of thiazole, in the thiamine biosynthesis pathway. The sulfur is donated as persulfide by IscS. This is tRNA sulfurtransferase from Shigella flexneri.